Consider the following 1026-residue polypeptide: Translation initiation factor IF-2, chloroplastic (1026 aa).

The N-terminal 63 residues, 1 to 63, are a transit peptide targeting the chloroplast; that stretch reads MPSMLVLVGT…KKWLCRYSVS (63 aa). Positions 158-173 are enriched in basic and acidic residues; sequence AEKLEIPKPGNKEGGE. Disordered regions lie at residues 158-208, 230-284, and 300-393; these read AEKL…TMKS, FNRG…PPVK, and VSEE…KWSK. The span at 178–194 shows a compositional bias: polar residues; the sequence is SQPSANSSNSRNGSYAN. Pro residues predominate over residues 254–269; sequence LAPPQPPFRPQPPVRP. Over residues 306–317 the composition is skewed to basic and acidic residues; it reads SSVKSKERKPIL. Residues 384-393 show a composition bias toward basic residues; the sequence is SGRKGRKWSK. One can recognise a tr-type G domain in the interval 499 to 672; that stretch reads DRPPVITIMG…MLVAELQELK (174 aa). The G1 stretch occupies residues 508 to 515; sequence GHVDHGKT. 508–515 lines the GTP pocket; it reads GHVDHGKT. Residues 533–537 form a G2 region; that stretch reads GITQG. The segment at 558 to 561 is G3; it reads DTPG. Residues 558 to 562 and 612 to 615 contribute to the GTP site; these read DTPGH and NKID. The interval 612–615 is G4; the sequence is NKID. A G5 region spans residues 648-650; sequence SAL.

Belongs to the TRAFAC class translation factor GTPase superfamily. Classic translation factor GTPase family. IF-2 subfamily.

The protein localises to the plastid. The protein resides in the chloroplast. In terms of biological role, one of the essential components for the initiation of protein synthesis. Protects formylmethionyl-tRNA from spontaneous hydrolysis and promotes its binding to the 30S ribosomal subunits. Also involved in the hydrolysis of GTP during the formation of the 70S ribosomal complex. The protein is Translation initiation factor IF-2, chloroplastic of Arabidopsis thaliana (Mouse-ear cress).